Here is a 318-residue protein sequence, read N- to C-terminus: Death effector domain-containing protein (318 aa).

In terms of domain architecture, DED spans 25 to 103 (SLHRMFDIVG…RHDLLPYVTL (79 aa)). The segment at 128-191 (PRALSDPEPR…SVTPDPKEKQ (64 aa)) is disordered.

In terms of assembly, interacts with CASP8, CASP10, KRT8, KRT18, CASP3 and FADD. Homodimerizes and heterodimerizes with DEDD2. Exists predominantly in a mono- or diubiquitinated form. As to expression, widely expressed with highest levels in testis. Within the testis, highly expressed in germ cells but not expressed in Sertoli cells.

Its subcellular location is the cytoplasm. The protein resides in the nucleus. It localises to the nucleolus. A scaffold protein that directs CASP3 to certain substrates and facilitates their ordered degradation during apoptosis. May also play a role in mediating CASP3 cleavage of KRT18. Regulates degradation of intermediate filaments during apoptosis. May play a role in the general transcription machinery in the nucleus and might be an important regulator of the activity of GTF3C3. Inhibits DNA transcription in vitro. This chain is Death effector domain-containing protein (Dedd), found in Rattus norvegicus (Rat).